Consider the following 270-residue polypeptide: Putative tRNA (cytidine(32)/guanosine(34)-2'-O)-methyltransferase (270 aa).

The S-adenosyl-L-methionine site is built by Gly-53, Trp-55, Asp-78, Asp-94, and Asp-119. The Proton acceptor role is filled by Lys-159.

Belongs to the class I-like SAM-binding methyltransferase superfamily. RNA methyltransferase RlmE family. TRM7 subfamily.

Its subcellular location is the cytoplasm. The catalysed reaction is cytidine(32)/guanosine(34) in tRNA + 2 S-adenosyl-L-methionine = 2'-O-methylcytidine(32)/2'-O-methylguanosine(34) in tRNA + 2 S-adenosyl-L-homocysteine + 2 H(+). Methylates the 2'-O-ribose of nucleotides at positions 32 and 34 of the tRNA anticodon loop of substrate tRNAs. The sequence is that of Putative tRNA (cytidine(32)/guanosine(34)-2'-O)-methyltransferase (fsjA) from Dictyostelium discoideum (Social amoeba).